We begin with the raw amino-acid sequence, 361 residues long: Phospho-N-acetylmuramoyl-pentapeptide-transferase (361 aa).

10 helical membrane passes run 25 to 45 (RTVLAALTALIISFIVGPAMI), 73 to 93 (TMGGALILVSIAITTLLWADL), 97 to 117 (YVWIVLITTLGFGMIGWVDDY), 134 to 154 (LFWQSAIAILVALYLVLTAEL), 168 to 188 (VAVPLGVTGFVALTYFVIVGT), 200 to 220 (GLAIMPTVMISSALAIFSYVA), 237 to 257 (AGELAVFCGALAGAGLAFLWF), 264 to 284 (VFMGDVGALALGAALGIVTVI), 289 to 309 (IVMLIMGGVFVVETLSVMLQV), and 338 to 358 (QVVVRFWIITMMLVLFGLSSL).

The protein belongs to the glycosyltransferase 4 family. MraY subfamily. Mg(2+) is required as a cofactor.

It localises to the cell inner membrane. The enzyme catalyses UDP-N-acetyl-alpha-D-muramoyl-L-alanyl-gamma-D-glutamyl-meso-2,6-diaminopimeloyl-D-alanyl-D-alanine + di-trans,octa-cis-undecaprenyl phosphate = di-trans,octa-cis-undecaprenyl diphospho-N-acetyl-alpha-D-muramoyl-L-alanyl-D-glutamyl-meso-2,6-diaminopimeloyl-D-alanyl-D-alanine + UMP. It participates in cell wall biogenesis; peptidoglycan biosynthesis. Its function is as follows. Catalyzes the initial step of the lipid cycle reactions in the biosynthesis of the cell wall peptidoglycan: transfers peptidoglycan precursor phospho-MurNAc-pentapeptide from UDP-MurNAc-pentapeptide onto the lipid carrier undecaprenyl phosphate, yielding undecaprenyl-pyrophosphoryl-MurNAc-pentapeptide, known as lipid I. The sequence is that of Phospho-N-acetylmuramoyl-pentapeptide-transferase from Nitrosospira multiformis (strain ATCC 25196 / NCIMB 11849 / C 71).